The sequence spans 388 residues: Succinate--CoA ligase [ADP-forming] subunit beta (388 aa).

The ATP-grasp domain maps to 9-243 (KQLFHRYGIP…ESQLAPLEVR (235 aa)). Residues Lys-45, 52–54 (GRG), Glu-98, Val-101, and Glu-106 each bind ATP. Mg(2+) contacts are provided by Asn-198 and Asp-212. Substrate-binding positions include Asn-263 and 320–322 (GIM).

The protein belongs to the succinate/malate CoA ligase beta subunit family. In terms of assembly, heterotetramer of two alpha and two beta subunits. It depends on Mg(2+) as a cofactor.

The enzyme catalyses succinate + ATP + CoA = succinyl-CoA + ADP + phosphate. The catalysed reaction is GTP + succinate + CoA = succinyl-CoA + GDP + phosphate. It participates in carbohydrate metabolism; tricarboxylic acid cycle; succinate from succinyl-CoA (ligase route): step 1/1. Functionally, succinyl-CoA synthetase functions in the citric acid cycle (TCA), coupling the hydrolysis of succinyl-CoA to the synthesis of either ATP or GTP and thus represents the only step of substrate-level phosphorylation in the TCA. The beta subunit provides nucleotide specificity of the enzyme and binds the substrate succinate, while the binding sites for coenzyme A and phosphate are found in the alpha subunit. This is Succinate--CoA ligase [ADP-forming] subunit beta from Syntrophotalea carbinolica (strain DSM 2380 / NBRC 103641 / GraBd1) (Pelobacter carbinolicus).